The sequence spans 647 residues: Threonine--tRNA ligase (647 aa).

Positions 1-61 (MIKITFPDGA…EEDGSIEIVT (61 aa)) constitute a TGS domain. The interval 240–538 (DHRKLGKELD…LIETYKGAFP (299 aa)) is catalytic. The Zn(2+) site is built by C334, H385, and H515.

The protein belongs to the class-II aminoacyl-tRNA synthetase family. Homodimer. Requires Zn(2+) as cofactor.

It localises to the cytoplasm. It carries out the reaction tRNA(Thr) + L-threonine + ATP = L-threonyl-tRNA(Thr) + AMP + diphosphate + H(+). In terms of biological role, catalyzes the attachment of threonine to tRNA(Thr) in a two-step reaction: L-threonine is first activated by ATP to form Thr-AMP and then transferred to the acceptor end of tRNA(Thr). Also edits incorrectly charged L-seryl-tRNA(Thr). The protein is Threonine--tRNA ligase of Streptococcus pyogenes serotype M1.